A 428-amino-acid polypeptide reads, in one-letter code: MDPSVTLWQFLLQLLREQGNGHIISWTSRDGGEFKLVDAEEVARLWGLRKNKTNMNYDKLSRALRYYYDKNIIRKVSGQKFVYKFVSYPEVAGCSTEDCPPQPEVSVTSTMPNVAPAAIHAAPGDTVSGKPGTPKGAGMAGPGGLARSSRNEYMRSGLYSTFTIQSLQPQPPPHPRPAVVLPSAAPAGAAAPPSGSRSTSPSPLEACLEAEEAGLPLQVILTPPEAPNLKSEELNVEPGLGRALPPEVKVEGPKEELEVAGERGFVPETTKAEPEVPPQEGVPARLPAVVMDTAGQAGGHAASSPEISQPQKGRKPRDLELPLSPSLLGGPGPERTPGSGSGSGLQAPGPALTPSLLPTHTLTPVLLTPSSLPPSIHFWSTLSPIAPRSPAKLSFQFPSSGSAQVHIPSISVDGLSTPVVLSPGPQKP.

Positions V5–V86 form a DNA-binding region, ETS. Disordered stretches follow at residues A121–S149, Q165–E205, and N228–P358. Over residues P177–E205 the composition is skewed to low complexity. Glycyl lysine isopeptide (Lys-Gly) (interchain with G-Cter in SUMO) cross-links involve residues K230, K249, and K254. Residues V248–G261 are compositionally biased toward basic and acidic residues. S324 carries the post-translational modification Phosphoserine; by MAPK1. T336, T353, T363, and T368 each carry phosphothreonine; by MAPK1. A sufficient for interaction with MAD2L2 region spans residues G349–S399. An O-linked (GlcNAc) threonine glycan is attached at T381. A Phosphoserine; by MAPK1 and MAPK8 modification is found at S383. S389 carries the post-translational modification Phosphoserine; by MAPK1. T417 carries the phosphothreonine; by MAPK1 modification. S422 carries the post-translational modification Phosphoserine; by MAPK1.

This sequence belongs to the ETS family. In terms of assembly, interacts in its sumoylated form with PIAS2/PIASX which enhances its transcriptional activator activity. Interacts with MAD2L2; the interaction is direct and promotes phosphorylation by the kinases MAPK8 and/or MAPK9. Interacts with POU1F1. Post-translationally, sumoylation represses transcriptional activator activity as it results in recruitment of HDAC2 to target gene promoters which leads to decreased histone acetylation and reduced transactivator activity. It also regulates nuclear retention. On mitogenic stimulation, phosphorylated on C-terminal serine and threonine residues by MAPK1. Ser-383 and Ser-389 are the preferred sites for MAPK1. In vitro, phosphorylation by MAPK1 potentiates ternary complex formation with the serum responses factors, SRE and SRF. Also phosphorylated on Ser-383 by MAPK8 and/or MAKP9. Phosphorylation leads to loss of sumoylation and restores transcriptional activator activity. Phosphorylated and activated by CAMK4, MAPK11, MAPK12 and MAPK14. Upon bFGF stimulus, phosphorylated by PAK1. Phosphorylated by PRP4K at Thr-417; phosphorylation activation ELK1 transcriptional activity. Lung and testis.

The protein resides in the nucleus. Functionally, transcription factor that binds to purine-rich DNA sequences. Forms a ternary complex with SRF and the ETS and SRF motifs of the serum response element (SRE) on the promoter region of immediate early genes such as FOS and IER2. Induces target gene transcription upon JNK and MAPK-signaling pathways stimulation. The sequence is that of ETS domain-containing protein Elk-1 from Homo sapiens (Human).